The sequence spans 1310 residues: Multidrug resistance protein 4 (1310 aa).

A run of 5 helical transmembrane segments spans residues 48-68, 125-145, 196-216, 223-243, and 299-319; these read WLDL…GVLT, MVCF…CFFV, KFGI…IGFA, LVIM…AVFA, and GLTV…AFSL. Residues 55–368 form the ABC transmembrane type-1 1 domain; it reads AVGIFGSIGC…IAIPLNIFAT (314 aa). The N-linked (GlcNAc...) asparagine glycan is linked to Asn336. The helical transmembrane segment at 342-362 threads the bilayer; that stretch reads VMIVFICVLIATQGLSIIAIP. N-linked (GlcNAc...) asparagine glycosylation occurs at Asn402. Positions 403-642 constitute an ABC transporter 1 domain; sequence ITLEDVQFRY…KGTYYGLVKR (240 aa). 438 to 445 lines the ATP pocket; sequence GASGCGKS. A glycan (N-linked (GlcNAc...) asparagine) is linked at Asn608. A run of 2 helical transmembrane segments spans residues 721–741 and 773–793; these read WFLS…FPFF and IIVV…IGLF. The ABC transmembrane type-1 2 domain maps to 722–1030; sequence FLSTFGFIGG…LGNIVPDIGK (309 aa). A glycan (N-linked (GlcNAc...) asparagine) is linked at Asn816. 3 helical membrane-spanning segments follow: residues 849–869, 871–891, and 945–965; these read VGNV…AFYY, WKVS…VFIN, and IGIY…TLLT. In terms of domain architecture, ABC transporter 2 spans 1065 to 1304; the sequence is IEFKDICFRY…KGFYYTLAMQ (240 aa). Residue 1100-1107 coordinates ATP; sequence GASGCGKS.

The protein belongs to the ABC transporter superfamily. ABCB family. Multidrug resistance exporter (TC 3.A.1.201) subfamily.

The protein resides in the membrane. The catalysed reaction is ATP + H2O + xenobioticSide 1 = ADP + phosphate + xenobioticSide 2.. Functionally, energy-dependent efflux pump responsible for decreased drug accumulation in multidrug resistance parasites. In Entamoeba histolytica (strain ATCC 30459 / HM-1:IMSS / ABRM), this protein is Multidrug resistance protein 4.